The following is a 98-amino-acid chain: Integration host factor subunit beta (98 aa).

The protein belongs to the bacterial histone-like protein family. Heterodimer of an alpha and a beta chain.

This protein is one of the two subunits of integration host factor, a specific DNA-binding protein that functions in genetic recombination as well as in transcriptional and translational control. This Pseudomonas fluorescens (strain Pf0-1) protein is Integration host factor subunit beta.